The sequence spans 106 residues: UPF0145 protein APJL_0492 (106 aa).

The protein belongs to the UPF0145 family.

The chain is UPF0145 protein APJL_0492 from Actinobacillus pleuropneumoniae serotype 3 (strain JL03).